Reading from the N-terminus, the 381-residue chain is Sterol 24-C-methyltransferase ERG6A (381 aa).

This sequence belongs to the class I-like SAM-binding methyltransferase superfamily. Erg6/SMT family.

It catalyses the reaction lanosterol + S-adenosyl-L-methionine = eburicol + S-adenosyl-L-homocysteine + H(+). It participates in steroid metabolism; ergosterol biosynthesis. Sterol 24-C-methyltransferase; part of the third module of ergosterol biosynthesis pathway that includes the late steps of the pathway. ERG6A and ERG6B methylate lanosterol at C-24 to produce eburicol. The third module or late pathway involves the ergosterol synthesis itself through consecutive reactions that mainly occur in the endoplasmic reticulum (ER) membrane. Firstly, the squalene synthase ERG9 catalyzes the condensation of 2 farnesyl pyrophosphate moieties to form squalene, which is the precursor of all steroids. Squalene synthase is crucial for balancing the incorporation of farnesyl diphosphate (FPP) into sterol and nonsterol isoprene synthesis. Secondly, squalene is converted into lanosterol by the consecutive action of the squalene epoxidase ERG1 and the lanosterol synthase ERG7. Then, the delta(24)-sterol C-methyltransferase ERG6 methylates lanosterol at C-24 to produce eburicol. Eburicol is the substrate of the sterol 14-alpha demethylase encoded by CYP51A, CYP51B and CYP51C, to yield 4,4,24-trimethyl ergosta-8,14,24(28)-trienol. CYP51B encodes the enzyme primarily responsible for sterol 14-alpha-demethylation, and plays an essential role in ascospore formation. CYP51A encodes an additional sterol 14-alpha-demethylase, induced on ergosterol depletion and responsible for the intrinsic variation in azole sensitivity. The third CYP51 isoform, CYP51C, does not encode a sterol 14-alpha-demethylase, but is required for full virulence on host wheat ears. The C-14 reductase ERG24 then reduces the C14=C15 double bond which leads to 4,4-dimethylfecosterol. A sequence of further demethylations at C-4, involving the C-4 demethylation complex containing the C-4 methylsterol oxidases ERG25, the sterol-4-alpha-carboxylate 3-dehydrogenase ERG26 and the 3-keto-steroid reductase ERG27, leads to the production of fecosterol via 4-methylfecosterol. ERG28 has a role as a scaffold to help anchor ERG25, ERG26 and ERG27 to the endoplasmic reticulum. The C-8 sterol isomerase ERG2 then catalyzes the reaction which results in unsaturation at C-7 in the B ring of sterols and thus converts fecosterol to episterol. The sterol-C5-desaturases ERG3A and ERG3BB then catalyze the introduction of a C-5 double bond in the B ring to produce 5-dehydroepisterol. The C-22 sterol desaturases ERG5A and ERG5B further convert 5-dehydroepisterol into ergosta-5,7,22,24(28)-tetraen-3beta-ol by forming the C-22(23) double bond in the sterol side chain. Finally, ergosta-5,7,22,24(28)-tetraen-3beta-ol is substrate of the C-24(28) sterol reductase ERG4 to produce ergosterol. This Gibberella zeae (strain ATCC MYA-4620 / CBS 123657 / FGSC 9075 / NRRL 31084 / PH-1) (Wheat head blight fungus) protein is Sterol 24-C-methyltransferase ERG6A (FG02783.1).